The primary structure comprises 961 residues: Glycine dehydrogenase (decarboxylating) (961 aa).

An N6-(pyridoxal phosphate)lysine modification is found at K709.

It belongs to the GcvP family. In terms of assembly, the glycine cleavage system is composed of four proteins: P, T, L and H. Requires pyridoxal 5'-phosphate as cofactor.

It catalyses the reaction N(6)-[(R)-lipoyl]-L-lysyl-[glycine-cleavage complex H protein] + glycine + H(+) = N(6)-[(R)-S(8)-aminomethyldihydrolipoyl]-L-lysyl-[glycine-cleavage complex H protein] + CO2. In terms of biological role, the glycine cleavage system catalyzes the degradation of glycine. The P protein binds the alpha-amino group of glycine through its pyridoxal phosphate cofactor; CO(2) is released and the remaining methylamine moiety is then transferred to the lipoamide cofactor of the H protein. The protein is Glycine dehydrogenase (decarboxylating) of Streptomyces avermitilis (strain ATCC 31267 / DSM 46492 / JCM 5070 / NBRC 14893 / NCIMB 12804 / NRRL 8165 / MA-4680).